The chain runs to 214 residues: Imidazole glycerol phosphate synthase subunit HisH (214 aa).

Positions 2–214 (RVALIDYGSG…LIANFLRWAP (213 aa)) constitute a Glutamine amidotransferase type-1 domain. The active-site Nucleophile is the Cys-88. Active-site residues include His-194 and Glu-196.

As to quaternary structure, heterodimer of HisH and HisF.

The protein localises to the cytoplasm. It carries out the reaction 5-[(5-phospho-1-deoxy-D-ribulos-1-ylimino)methylamino]-1-(5-phospho-beta-D-ribosyl)imidazole-4-carboxamide + L-glutamine = D-erythro-1-(imidazol-4-yl)glycerol 3-phosphate + 5-amino-1-(5-phospho-beta-D-ribosyl)imidazole-4-carboxamide + L-glutamate + H(+). It catalyses the reaction L-glutamine + H2O = L-glutamate + NH4(+). It participates in amino-acid biosynthesis; L-histidine biosynthesis; L-histidine from 5-phospho-alpha-D-ribose 1-diphosphate: step 5/9. IGPS catalyzes the conversion of PRFAR and glutamine to IGP, AICAR and glutamate. The HisH subunit catalyzes the hydrolysis of glutamine to glutamate and ammonia as part of the synthesis of IGP and AICAR. The resulting ammonia molecule is channeled to the active site of HisF. The sequence is that of Imidazole glycerol phosphate synthase subunit HisH from Rhodospirillum rubrum (strain ATCC 11170 / ATH 1.1.1 / DSM 467 / LMG 4362 / NCIMB 8255 / S1).